The primary structure comprises 170 residues: Urease accessory protein UreE (170 aa).

Residues 137 to 170 (PFDPESGAYAHAGREQSHAHSHEHSHADGHTHAH) form a disordered region. Residues 148–170 (AGREQSHAHSHEHSHADGHTHAH) show a composition bias toward basic and acidic residues.

The protein belongs to the UreE family.

The protein resides in the cytoplasm. Functionally, involved in urease metallocenter assembly. Binds nickel. Probably functions as a nickel donor during metallocenter assembly. The polypeptide is Urease accessory protein UreE (Pseudoalteromonas translucida (strain TAC 125)).